A 228-amino-acid polypeptide reads, in one-letter code: Protein N-lysine methyltransferase METTL21D (228 aa).

An N-acetylalanine modification is found at A2. Residues W43, 75–77 (GSG), D96, W126, A142, and Y147 each bind S-adenosyl-L-methionine.

It belongs to the methyltransferase superfamily. METTL21 family. Interacts with ALKBH6. Interacts with ASPSCR1 and UBXN6; interaction with ASPSCR1, but not with UBXN6, enhances VCP methylation. As to expression, widely expressed.

The protein localises to the cytoplasm. The catalysed reaction is L-lysyl-[protein] + 3 S-adenosyl-L-methionine = N(6),N(6),N(6)-trimethyl-L-lysyl-[protein] + 3 S-adenosyl-L-homocysteine + 3 H(+). Its function is as follows. Protein N-lysine methyltransferase that specifically trimethylates 'Lys-315' of VCP/p97; this modification may decrease VCP ATPase activity. The sequence is that of Protein N-lysine methyltransferase METTL21D (Vcpkmt) from Mus musculus (Mouse).